We begin with the raw amino-acid sequence, 547 residues long: CTP synthase (547 aa).

The segment at 1 to 265 (MARFVFITGG…DQAVLDAFSI (265 aa)) is amidoligase domain. S13 contacts CTP. S13 provides a ligand contact to UTP. ATP contacts are provided by residues 14 to 19 (SLGKGL) and D71. Positions 71 and 139 each coordinate Mg(2+). CTP contacts are provided by residues 146 to 148 (DIE), 186 to 191 (KTKPTQ), and K222. UTP contacts are provided by residues 186–191 (KTKPTQ) and K222. The region spanning 291–546 (NVAIVGKYTQ…VRAAKEVSRL (256 aa)) is the Glutamine amidotransferase type-1 domain. Residue G353 coordinates L-glutamine. The active-site Nucleophile; for glutamine hydrolysis is C380. Residues 381–384 (LGMQ), E404, and R474 contribute to the L-glutamine site. Residues H519 and E521 contribute to the active site.

The protein belongs to the CTP synthase family. In terms of assembly, homotetramer.

It catalyses the reaction UTP + L-glutamine + ATP + H2O = CTP + L-glutamate + ADP + phosphate + 2 H(+). The enzyme catalyses L-glutamine + H2O = L-glutamate + NH4(+). It carries out the reaction UTP + NH4(+) + ATP = CTP + ADP + phosphate + 2 H(+). The protein operates within pyrimidine metabolism; CTP biosynthesis via de novo pathway; CTP from UDP: step 2/2. With respect to regulation, allosterically activated by GTP, when glutamine is the substrate; GTP has no effect on the reaction when ammonia is the substrate. The allosteric effector GTP functions by stabilizing the protein conformation that binds the tetrahedral intermediate(s) formed during glutamine hydrolysis. Inhibited by the product CTP, via allosteric rather than competitive inhibition. Its function is as follows. Catalyzes the ATP-dependent amination of UTP to CTP with either L-glutamine or ammonia as the source of nitrogen. Regulates intracellular CTP levels through interactions with the four ribonucleotide triphosphates. In Dinoroseobacter shibae (strain DSM 16493 / NCIMB 14021 / DFL 12), this protein is CTP synthase.